Consider the following 585-residue polypeptide: Glutamate decarboxylase 2 (585 aa).

The disordered stretch occupies residues 1–25; it reads MASPGSGFWSFGSEDGSGDPENPGT. Phosphoserine is present on residues Ser3, Ser6, Ser10, Ser13, and Ser17. S-palmitoyl cysteine attachment occurs at residues Cys30 and Cys45. 181–183 provides a ligand contact to substrate; that stretch reads QLS. Lys396 carries the post-translational modification N6-(pyridoxal phosphate)lysine. Arg558 serves as a coordination point for substrate.

Belongs to the group II decarboxylase family. In terms of assembly, homodimer. The cofactor is pyridoxal 5'-phosphate. Post-translationally, the N-terminus is blocked. In terms of processing, phosphorylated; which does not affect kinetic parameters or subcellular location. Palmitoylated; which is required for presynaptic clustering.

The protein localises to the cytoplasm. Its subcellular location is the cytosol. It localises to the cytoplasmic vesicle. The protein resides in the presynaptic cell membrane. It is found in the golgi apparatus membrane. The enzyme catalyses L-glutamate + H(+) = 4-aminobutanoate + CO2. In terms of biological role, catalyzes the production of GABA. This is Glutamate decarboxylase 2 (Gad2) from Rattus norvegicus (Rat).